The sequence spans 86 residues: MPKPDIHPTWYPDAKVICNGEVVMTTGSTQPEIHVDVWSGNHPFFTGTQKILDTEGRVDRFMKKYGMGQKKSGDKAKAEAKADAKS.

This sequence belongs to the bacterial ribosomal protein bL31 family. Type A subfamily. Part of the 50S ribosomal subunit.

In terms of biological role, binds the 23S rRNA. The sequence is that of Large ribosomal subunit protein bL31 from Parasynechococcus marenigrum (strain WH8102).